Reading from the N-terminus, the 193-residue chain is Ion-translocating oxidoreductase complex subunit A (193 aa).

A run of 6 helical transmembrane segments spans residues 5 to 25, 39 to 59, 63 to 83, 102 to 122, 134 to 154, and 171 to 191; these read LLLFVGTVLVNNFVLVKFLGL, MGMGLATTFVMTLTSICAWLI, ILIPLNLIYLRTLAFILVIAV, LLGIFLPLITTNCAVLGVALL, ALYGFSAAVGFSLVMVLFAAI, and AIALITAGLMSLAFMGFSGLV.

It belongs to the NqrDE/RnfAE family. The complex is composed of six subunits: RsxA, RsxB, RsxC, RsxD, RsxE and RsxG.

Its subcellular location is the cell inner membrane. Its function is as follows. Part of a membrane-bound complex that couples electron transfer with translocation of ions across the membrane. Required to maintain the reduced state of SoxR. This is Ion-translocating oxidoreductase complex subunit A from Shigella flexneri serotype 5b (strain 8401).